We begin with the raw amino-acid sequence, 523 residues long: Probable DNA ligase (523 aa).

Glutamate 210 contacts ATP. Lysine 212 (N6-AMP-lysine intermediate) is an active-site residue. The ATP site is built by arginine 217, arginine 232, glutamate 261, phenylalanine 317, arginine 388, and lysine 394.

The protein belongs to the ATP-dependent DNA ligase family. The cofactor is Mg(2+).

The catalysed reaction is ATP + (deoxyribonucleotide)n-3'-hydroxyl + 5'-phospho-(deoxyribonucleotide)m = (deoxyribonucleotide)n+m + AMP + diphosphate.. DNA ligase that seals nicks in double-stranded DNA during DNA replication, DNA recombination and DNA repair. The polypeptide is Probable DNA ligase (Nocardia farcinica (strain IFM 10152)).